A 439-amino-acid polypeptide reads, in one-letter code: Putative porin QuiX (439 aa).

The N-terminal stretch at 1 to 22 (MRHFFKLGLVSAAVLGSQMTLA) is a signal peptide.

The protein belongs to the OprB family.

It localises to the cell outer membrane. Could be involved in the transport of quinate or shikimate. This Acinetobacter baylyi (strain ATCC 33305 / BD413 / ADP1) protein is Putative porin QuiX (quiX).